The following is a 481-amino-acid chain: Beta-1,3-glucan-binding protein (481 aa).

Residues 1 to 18 (RCARVCAVLFLFIQISYG) form the signal peptide. One can recognise a CBM39 domain in the interval 20–120 (YQVPQVTVQA…LSFTVSALED (101 aa)). N-linked (GlcNAc...) asparagine glycosylation occurs at asparagine 110. Residues 124-481 (TGTGTDPVPT…LVDYVKVVAL (358 aa)) enclose the GH16 domain.

It belongs to the insect beta-1,3-glucan binding protein family.

It is found in the secreted. Its function is as follows. Involved in the recognition of invading microorganisms. Binds specifically to beta-1,3-glucan and activates the phenoloxidase cascade. The chain is Beta-1,3-glucan-binding protein from Hyphantria cunea (Fall webworm moth).